A 512-amino-acid chain; its full sequence is D-alanine--D-alanyl carrier protein ligase (512 aa).

152 to 153 lines the ATP pocket; that stretch reads TS. Position 199 (Asp199) interacts with D-alanine. 294–299 contributes to the ATP binding site; sequence NAYGPT. Position 303 (Val303) interacts with D-alanine. ATP contacts are provided by residues Asp385, 397–400, and Lys499; that span reads YGGR. Lys499 serves as a coordination point for D-alanine.

The protein belongs to the ATP-dependent AMP-binding enzyme family. DltA subfamily.

The protein localises to the cytoplasm. It catalyses the reaction holo-[D-alanyl-carrier protein] + D-alanine + ATP = D-alanyl-[D-alanyl-carrier protein] + AMP + diphosphate. It functions in the pathway cell wall biogenesis; lipoteichoic acid biosynthesis. In terms of biological role, catalyzes the first step in the D-alanylation of lipoteichoic acid (LTA), the activation of D-alanine and its transfer onto the D-alanyl carrier protein (Dcp) DltC. In an ATP-dependent two-step reaction, forms a high energy D-alanyl-AMP intermediate, followed by transfer of the D-alanyl residue as a thiol ester to the phosphopantheinyl prosthetic group of the Dcp. D-alanylation of LTA plays an important role in modulating the properties of the cell wall in Gram-positive bacteria, influencing the net charge of the cell wall. The chain is D-alanine--D-alanyl carrier protein ligase from Streptococcus equi subsp. equi (strain 4047).